Consider the following 677-residue polypeptide: Sulfate transporter 2.2 (677 aa).

Topologically, residues Met-1–Asp-110 are cytoplasmic. A helical membrane pass occupies residues Leu-111–Leu-131. Residues Ala-132–Gly-133 lie on the Extracellular side of the membrane. Residues Leu-134 to Gly-154 form a helical membrane-spanning segment. The Cytoplasmic segment spans residues Thr-155 to Glu-158. A helical membrane pass occupies residues Leu-159 to Gln-179. At Asp-180–Lys-190 the chain is on the extracellular side. A helical transmembrane segment spans residues Ile-191–Leu-211. The Cytoplasmic segment spans residues Gly-212–Phe-213. A helical membrane pass occupies residues Leu-214–Ile-234. The Extracellular portion of the chain corresponds to Gly-235–Gln-270. The N-linked (GlcNAc...) asparagine glycan is linked to Asn-250. The chain crosses the membrane as a helical span at residues Pro-271–Gly-291. Topologically, residues Lys-292–Lys-296 are cytoplasmic. The helical transmembrane segment at Leu-297–Tyr-317 threads the bilayer. Topologically, residues Leu-318–Gly-352 are extracellular. Residues Gln-353 to Gly-373 form a helical membrane-spanning segment. At Arg-374–Glu-389 the chain is on the cytoplasmic side. The helical transmembrane segment at Met-390–Gly-410 threads the bilayer. Topologically, residues Ser-411–Gly-422 are extracellular. Asn-418 carries N-linked (GlcNAc...) asparagine glycosylation. Residues Cys-423–Leu-443 form a helical membrane-spanning segment. At Thr-444 to Phe-446 the chain is on the cytoplasmic side. A helical membrane pass occupies residues Leu-447 to Ile-467. At Asp-468–Asp-482 the chain is on the extracellular side. Residues Phe-483–Leu-503 traverse the membrane as a helical segment. At Leu-504 to Cys-677 the chain is on the cytoplasmic side. One can recognise an STAS domain in the interval Tyr-540–Tyr-666.

It belongs to the SLC26A/SulP transporter (TC 2.A.53) family. In terms of tissue distribution, expressed in the phloem in roots and in the phloem of vascular bundles in leaves.

The protein localises to the membrane. In terms of biological role, low-affinity H(+)/sulfate cotransporter that may be involved in the distribution of sulfate from vascular bundles to the palisade cells of the leaves. Plays a central role in the regulation of sulfate assimilation. The protein is Sulfate transporter 2.2 (SULTR2;2) of Arabidopsis thaliana (Mouse-ear cress).